Here is a 314-residue protein sequence, read N- to C-terminus: Ribosomal RNA small subunit methyltransferase H (314 aa).

Residues 34 to 36 (GGH), D53, F82, D103, and Q110 contribute to the S-adenosyl-L-methionine site.

The protein belongs to the methyltransferase superfamily. RsmH family.

Its subcellular location is the cytoplasm. It carries out the reaction cytidine(1402) in 16S rRNA + S-adenosyl-L-methionine = N(4)-methylcytidine(1402) in 16S rRNA + S-adenosyl-L-homocysteine + H(+). Its function is as follows. Specifically methylates the N4 position of cytidine in position 1402 (C1402) of 16S rRNA. The protein is Ribosomal RNA small subunit methyltransferase H of Limosilactobacillus fermentum (strain NBRC 3956 / LMG 18251) (Lactobacillus fermentum).